The primary structure comprises 588 residues: Adenine deaminase (588 aa).

This sequence belongs to the metallo-dependent hydrolases superfamily. Adenine deaminase family. As to quaternary structure, homodimer. Mn(2+) serves as cofactor.

It catalyses the reaction adenine + H2O + H(+) = hypoxanthine + NH4(+). This Escherichia coli O157:H7 (strain EC4115 / EHEC) protein is Adenine deaminase.